Here is a 1123-residue protein sequence, read N- to C-terminus: MADRGLPSEAPVVTTSPAGPPSDGPMQRLLASLAGLRQPPTPTAETANGADDPAFLATAKLRAAMAAFLLSGTAIAPADARDCWRPLLEHLCALHRAHGLPETALLAENLPGLLVHRLVVALPEAPDQAFREMEVIKDTILAVTGSDTSHALDSAGLRTAAALGPVRVRQCAVEWIDRWQTVTKSCLAMSPRTSIEALGETSLKMAPVPLGQPSANLTTPAYSLLFPAPFVQEGLRFLALVSNRVTLFSAHLQRIDDATLTPLTRALFTLALVDEYLTTPERGAVVPPPLLAQFQHTVREIDPAIMIPPLEANKMVRSREEVRVSTALSRVSPRSACAPPGTLMARVRTDVAVFDPDVPFLSSSALAVFQPAVSSLLQLGEQPSAGAQQRLLALLQQTWTLIQNTNSPSVVINTLIDAGFTPSHCTHYLSALEGFLAAGVPARTPTGHGLGEVQQLFGCIALAGSNVFGLAREYGYYANYVKTFRRVQGASEHTHGRLCEAVGLSGGVLSQTLARIMGPAVPTEHLASLRRALVGEFETAERRFSSGQPSLLRETALIWIDVYGQTHWDITPTTPATPLSALLPVGQPSHAPSVHLAAATQIRFPALEGIHPNVLADPGFVPYVLALVVGDALRATCSAAYLPRPVEFALRVLAWARDFGLGYLPTVEGHRTKLGALITLLEPAARGGLGPTMQMADNIEQLLRELYVISRGAVEQLRPLVQLQPPPPPEVGTSLLLISMYALAARGVLQDLAERADPLIRQLEDAIVLLRLHMRTLSAFFECRFESDGRRLYAVVGDTPDRLGPWPPEAMGDAVSQYCSMYHDAKRALVASLASLRSVITETTAHLGVCDELAAQVSHEDNVLAVVRREIHGFLSVVSGIHARASKLLSGDQVPGFCFMGQFLARWRRLSACYQAARAAAGPEPVAEFVQELHDTWKGLQTERAVVVAPLVSSADQRAAAIREVMAHAPEDAPPQSPAADRVVLTSRRDLGAWGDYSLGPLGQTTAVPDSVDLSRQGLAVTLSMDWLLMNELLRVTDGVFRASAFRPLAGPESPRDLEVRDAGNSLPAPMPMDAQKPEAYGHGPRQADREGAPHSNTPVEDDEMIPEDTVAPPTDLPLTSYQ.

Disordered regions lie at residues 1–27 (MADRGLPSEAPVVTTSPAGPPSDGPMQ) and 1047–1123 (RPLA…TSYQ). The segment at 568–1123 (WDITPTTPAT…PTDLPLTSYQ (556 aa)) is interaction with large tegument protein.

The protein belongs to the herpesviridae inner tegument protein family. As to quaternary structure, interacts (via C-terminus) with the large tegument protein/LTP (via N-terminus). Interacts with host DST. Interacts with host RIGI; this interaction inhibits RIGI activation. Interacts with host CGAS; this interaction inhibits host CGAS activation. Interacts with host TAOK3.

The protein resides in the virion tegument. It is found in the host cytoplasm. The protein localises to the host nucleus. Its subcellular location is the host Golgi apparatus. It localises to the host trans-Golgi network. The enzyme catalyses L-asparaginyl-[protein] + H2O = L-aspartyl-[protein] + NH4(+). It carries out the reaction L-glutaminyl-[protein] + H2O = L-glutamyl-[protein] + NH4(+). Plays an essential role in cytoplasmic secondary envelopment during viral egress. Interacts with the capsid via the large tegument protein/LTP and participates in its transport to the host trans-Golgi network (TGN) where secondary envelopment occurs. Modulates tegumentation and capsid accumulation at the viral assembly complex. Plays a role in microtubule-based retrograde axonal transport to promote neuroinvasion. Also plays a role in the inhibition of host immune response by acting as a viral deamidase. Deamidates host RIGI on two asparagines which becomes unable to sense viral dsRNA. In turn, its ability to trigger antiviral immune response and restrict viral replication is inhibited. Also deamidates a critical asparagine on host CGAS which abolishes cGAMP synthesis and downstream innate immune activation. This chain is Inner tegument protein (UL37), found in Homo sapiens (Human).